Consider the following 78-residue polypeptide: UPF0369 protein RP167 (78 aa).

Belongs to the SDHAF4 family.

The sequence is that of UPF0369 protein RP167 from Rickettsia prowazekii (strain Madrid E).